Here is a 563-residue protein sequence, read N- to C-terminus: BOS complex subunit NCLN (563 aa).

Residues 1–42 form the signal peptide; the sequence is MLEEAGEVLENVLKASCLPLGFIVFLPAVLLLVAPPLPAADA. The Lumenal segment spans residues 43 to 522; sequence AHEFTVYRMQ…VMNAYRVKPA (480 aa). N-linked (GlcNAc...) asparagine glycosylation is found at asparagine 241 and asparagine 428. Residues 523–543 form a helical membrane-spanning segment; that stretch reads IFDLLLALCIGAYLGMAYTAV. The Cytoplasmic segment spans residues 544 to 563; sequence QHFHVLYKTVQRLLLKAKAQ.

It belongs to the nicastrin family. Component of the back of Sec61 (BOS) complex, composed of NCLN/Nicalin, NOMO1 and TMEM147. The BOS complex is part of the multi-pass translocon (MPT) complex, composed of three subcomplexes, the GEL complex (composed of RAB5IF/OPTI and TMCO1), the BOS complex (composed of NCLN/Nicalin, NOMO1 and TMEM147) and the PAT complex (composed of WDR83OS/Asterix and CCDC47). The MPT complex associates with the SEC61 complex.

The protein resides in the endoplasmic reticulum membrane. In terms of biological role, component of the multi-pass translocon (MPT) complex that mediates insertion of multi-pass membrane proteins into the lipid bilayer of membranes. The MPT complex takes over after the SEC61 complex: following membrane insertion of the first few transmembrane segments of proteins by the SEC61 complex, the MPT complex occludes the lateral gate of the SEC61 complex to promote insertion of subsequent transmembrane regions. May antagonize Nodal signaling and subsequent organization of axial structures during mesodermal patterning, via its interaction with NOMO. The protein is BOS complex subunit NCLN (Ncln) of Mus musculus (Mouse).